The sequence spans 110 residues: Iron-sulfur cluster assembly protein CyaY (110 aa).

It belongs to the frataxin family.

Functionally, involved in iron-sulfur (Fe-S) cluster assembly. May act as a regulator of Fe-S biogenesis. The sequence is that of Iron-sulfur cluster assembly protein CyaY from Pseudomonas putida (strain W619).